The primary structure comprises 102 residues: MNGQNIRIRLKAFDHRILDSSTREIVSTAKRTGAQVRGPIPLPTRIERFTVNRSPHIDKKSREQFEMRTHKRVLDIVDPTPQTVDALMKLDLAAGVDVEIKL.

It belongs to the universal ribosomal protein uS10 family. In terms of assembly, part of the 30S ribosomal subunit.

Functionally, involved in the binding of tRNA to the ribosomes. This is Small ribosomal subunit protein uS10 from Methylobacterium nodulans (strain LMG 21967 / CNCM I-2342 / ORS 2060).